Consider the following 142-residue polypeptide: Lysozyme 2 (142 aa).

Positions 1–20 (MLKLTLTILAAVLLVTPAFG) are cleaved as a signal peptide. The region spanning 21–142 (KVYTRCSLAR…HTLPSIDDCF (122 aa)) is the C-type lysozyme domain. 4 disulfide bridges follow: cysteine 26–cysteine 141, cysteine 47–cysteine 131, cysteine 82–cysteine 98, and cysteine 94–cysteine 112. Glutamate 52 is a catalytic residue. N-linked (GlcNAc...) asparagine glycosylation is present at asparagine 66. The active site involves aspartate 70.

Belongs to the glycosyl hydrolase 22 family. Expressed only in the midgut where it is concentrated around the middle in all larval stages.

The protein localises to the secreted. It carries out the reaction Hydrolysis of (1-&gt;4)-beta-linkages between N-acetylmuramic acid and N-acetyl-D-glucosamine residues in a peptidoglycan and between N-acetyl-D-glucosamine residues in chitodextrins.. Its function is as follows. Lysozymes have primarily a bacteriolytic function. Shows antibacterial activity against Gram-positive bacterium M.luteus but shows no activity against Gram-negative bacterium E.coli. Likely to play a role in the eradication of ingested pathogens during their passage through the intestine. The protein is Lysozyme 2 of Lucilia sericata (Green bottle fly).